The chain runs to 397 residues: MVERARRLGRWFLALDSLLVILGFFVVMPMISLRFVDQLGWAAGVVGLALGLRQLTQQGLGILGGSLADKFGARPLIVGGMLLRAAGFASLAYAQSGLELILSCVISGLGGCLFDPPRAALVIKFTRPRQRGRYISLLMMLESAGAVVGALLGSWLLNFDFEYVCLLGAGLFVCAALCNLLILPAYKLSVRPTPIRAGLGQVLADKAFCRLVLILSGYYALWVQVMLIFPILVKQMAGTTTAVGWMYTLETAISLALLYPLARYGERHFKLESRLMAGVLLMTTGIGLVAFANTLPAVFMLLACFYLGIVIAEPARETLMTKLAQPGARGSYMGFSRLGLALGGMTGYVGGGALHDYAMLQGQPWLPWLVLGTVGVTTLLLLVNCFHREPSLARVNI.

Transmembrane regions (helical) follow at residues 11–31 (WFLA…MPMI), 32–52 (SLRF…ALGL), 71–91 (FGAR…FASL), 94–114 (AQSG…GCLF), 137–157 (LLMM…SWLL), 163–183 (YVCL…LLIL), 211–231 (LVLI…IFPI), 242–262 (AVGW…YPLA), 291–311 (FANT…GIVI), 340–360 (LALG…YAML), and 366–386 (LPWL…VNCF).

This sequence belongs to the major facilitator superfamily. DHA1 family. MdtH (TC 2.A.1.2.21) subfamily.

Its subcellular location is the cell inner membrane. In Aeromonas hydrophila subsp. hydrophila (strain ATCC 7966 / DSM 30187 / BCRC 13018 / CCUG 14551 / JCM 1027 / KCTC 2358 / NCIMB 9240 / NCTC 8049), this protein is Multidrug resistance protein MdtH.